A 1423-amino-acid chain; its full sequence is Serum albumin SDS-1 (1423 aa).

The N-terminal stretch at 1–23 is a signal peptide; that stretch reads MGKAMLKLCITLMVLVFSGTAES. Residues 24 to 29 constitute a propeptide that is removed on maturation; that stretch reads KGVMRR. 7 Albumin domains span residues 29–230, 231–426, 427–608, 609–811, 812–1031, 1032–1226, and 1227–1422; these read REDE…EDFK, HKLT…EFKS, EVEK…SDFK, MDVE…SQAR, QEAL…HTIH, MEIR…AIEK, and VIKD…AIKS. Residue His36 participates in Cu cation binding. Disulfide bonds link Cys42–Cys88, Cys87–Cys96, Cys109–Cys125, Cys124–Cys135, Cys167–Cys212, Cys211–Cys221, Cys244–Cys290, Cys289–Cys298, Cys311–Cys327, Cys326–Cys337, Cys363–Cys408, Cys407–Cys416, Cys439–Cys485, Cys484–Cys493, Cys506–Cys522, and Cys521–Cys532. Asn490 carries an N-linked (GlcNAc...) asparagine glycan. Asn541 carries an N-linked (GlcNAc...) asparagine glycan. 11 disulfide bridges follow: Cys556-Cys601, Cys622-Cys668, Cys667-Cys676, Cys689-Cys705, Cys704-Cys715, Cys747-Cys792, Cys791-Cys802, Cys825-Cys871, Cys870-Cys879, Cys892-Cys907, and Cys906-Cys947. Residue Asn652 is glycosylated (N-linked (GlcNAc...) asparagine). A glycan (N-linked (GlcNAc...) asparagine) is linked at Asn754. N-linked (GlcNAc...) asparagine glycans are attached at residues Asn908 and Asn911. The disordered stretch occupies residues 910 to 936; that stretch reads SNTSTTTSTTTSTTTSTTTSTTTSTTS. Repeat copies occupy residues 913–916, 917–920, 921–924, 925–928, 929–932, 933–935, and 936–939. The interval 913–939 is 7 X 4 AA tandem repeats of S-T-T-T; that stretch reads STTTSTTTSTTTSTTTSTTTSTTSTTT. A glycan (N-linked (GlcNAc...) asparagine) is linked at Asn954. 8 disulfide bridges follow: Cys969–Cys1014, Cys1013–Cys1022, Cys1045–Cys1091, Cys1090–Cys1099, Cys1112–Cys1128, Cys1127–Cys1138, Cys1163–Cys1208, and Cys1207–Cys1216. Residue Asn1070 is glycosylated (N-linked (GlcNAc...) asparagine). Asn1236 carries an N-linked (GlcNAc...) asparagine glycan. 6 cysteine pairs are disulfide-bonded: Cys1239/Cys1285, Cys1284/Cys1291, Cys1304/Cys1320, Cys1319/Cys1330, Cys1359/Cys1404, and Cys1403/Cys1412.

The protein belongs to the ALB/AFP/VDB family. In terms of tissue distribution, plasma.

It is found in the secreted. Its function is as follows. Serum albumin, the main protein of plasma, has a good binding capacity for water, Ca(2+), Na(+), K(+), fatty acids, hormones, bilirubin and drugs. Its main function is the regulation of the colloidal osmotic pressure of blood. The sequence is that of Serum albumin SDS-1 (SDS-1) from Petromyzon marinus (Sea lamprey).